The primary structure comprises 523 residues: Peptide chain release factor 3 (523 aa).

The region spanning Lys-8–His-275 is the tr-type G domain. GTP-binding positions include Ser-17–Thr-24, Asp-85–His-89, and Asn-139–Asp-142.

It belongs to the TRAFAC class translation factor GTPase superfamily. Classic translation factor GTPase family. PrfC subfamily.

The protein localises to the cytoplasm. Increases the formation of ribosomal termination complexes and stimulates activities of RF-1 and RF-2. It binds guanine nucleotides and has strong preference for UGA stop codons. It may interact directly with the ribosome. The stimulation of RF-1 and RF-2 is significantly reduced by GTP and GDP, but not by GMP. The protein is Peptide chain release factor 3 of Lactococcus lactis subsp. cremoris (strain SK11).